A 197-amino-acid polypeptide reads, in one-letter code: Recombination protein RecR (197 aa).

The C4-type zinc finger occupies 56 to 71; it reads CQQCRTLTEQALCNIC. Positions 79 to 174 constitute a Toprim domain; the sequence is KELCIVETPA…KVSRIAHGIP (96 aa).

The protein belongs to the RecR family.

Its function is as follows. May play a role in DNA repair. It seems to be involved in an RecBC-independent recombinational process of DNA repair. It may act with RecF and RecO. In Saccharophagus degradans (strain 2-40 / ATCC 43961 / DSM 17024), this protein is Recombination protein RecR.